Consider the following 265-residue polypeptide: MHNKQQVKIGIIGGSGLSESEAKKEIITIKTPYGEPSCPYEIEKIDDIEVLFLRRHGQKHSIPPHKVNYRANIYGFKNFGIERIFGVFATGSLTENIPPGSIVIPNQIIDFTQGMRANTFYEEKKVVHIDFTEPFCSEIRHYLLETARKIGINVISHATYICVNGPRLETAAEIKFFKNIGADIIGMTIMPEASLAREVEICYAAVAVVANYAAGISKFPLTVKEVIETMEDSLDAVGFLIKETIKKLPEERKCLCKHALKNASF.

Phosphate-binding positions include serine 15 and 55-56 (RH). Methionine 187 serves as a coordination point for substrate. Threonine 188 lines the phosphate pocket. 211–213 (NYA) is a substrate binding site.

It belongs to the PNP/MTAP phosphorylase family. MTAP subfamily. As to quaternary structure, homotrimer.

The enzyme catalyses S-methyl-5'-thioinosine + phosphate = 5-(methylsulfanyl)-alpha-D-ribose 1-phosphate + hypoxanthine. Its pathway is purine metabolism; purine nucleoside salvage. Its function is as follows. Catalyzes the reversible phosphorylation of S-methyl-5'-thioinosine (MTI) to hypoxanthine and 5-methylthioribose-1-phosphate. Involved in the breakdown of S-methyl-5'-thioadenosine (MTA), a major by-product of polyamine biosynthesis. Catabolism of (MTA) occurs via deamination to MTI and phosphorolysis to hypoxanthine. This is Probable S-methyl-5'-thioinosine phosphorylase from Thermodesulfovibrio yellowstonii (strain ATCC 51303 / DSM 11347 / YP87).